The following is a 1197-amino-acid chain: Sensor protein EvgS (1197 aa).

Residues 1–21 form the signal peptide; sequence MKFLPYIFLLCCGLWSTISFA. Over 22–325 the chain is Cytoplasmic; it reads DEDYIEYRGI…SMTDENGSVR (304 aa). The chain crosses the membrane as a helical span at residues 326-346; sequence GVMGDILNIITLQTGLNFSPI. Topologically, residues 347 to 537 are periplasmic; the sequence is TVSHNIHAGT…TWDLYSEQFY (191 aa). The chain crosses the membrane as a helical span at residues 538 to 558; the sequence is IVTTLSVLLVGSSLLWGFYLL. At 559–1197 the chain is on the cytoplasmic side; the sequence is RSVRRRKVIQ…EIAVFCQKND (639 aa). A Histidine kinase domain is found at 718 to 938; the sequence is TMSHEIRTPI…TFTITIPVEI (221 aa). At His721 the chain carries Phosphohistidine; by autocatalysis. One can recognise a Response regulatory domain in the interval 960–1074; that stretch reads SILIADDHPT…VLKTHLSQLH (115 aa). Asp1009 is subject to 4-aspartylphosphate. The HPt domain occupies 1098 to 1197; it reads DLQLMQEILM…EIAVFCQKND (100 aa). The residue at position 1137 (His1137) is a Phosphohistidine.

Post-translationally, activation requires a sequential transfer of a phosphate group from a His in the primary transmitter domain, to an Asp in the receiver domain and to a His in the secondary transmitter domain.

It is found in the cell inner membrane. The catalysed reaction is ATP + protein L-histidine = ADP + protein N-phospho-L-histidine.. In terms of biological role, member of the two-component regulatory system EvgS/EvgA. Phosphorylates EvgA via a four-step phosphorelay in response to environmental signals. This chain is Sensor protein EvgS (evgS), found in Escherichia coli (strain K12).